The sequence spans 283 residues: Putative 4-diphosphocytidyl-2-C-methyl-D-erythritol kinase (283 aa).

Lys-10 is a catalytic residue. An ATP-binding site is contributed by 94-104 (PVCAGLGGGST). Asp-136 is an active-site residue.

Belongs to the GHMP kinase family. IspE subfamily.

The enzyme catalyses 4-CDP-2-C-methyl-D-erythritol + ATP = 4-CDP-2-C-methyl-D-erythritol 2-phosphate + ADP + H(+). In terms of biological role, catalyzes the phosphorylation of the position 2 hydroxy group of 4-diphosphocytidyl-2C-methyl-D-erythritol. The protein is Putative 4-diphosphocytidyl-2-C-methyl-D-erythritol kinase (ispE) of Streptococcus agalactiae serotype Ia (strain ATCC 27591 / A909 / CDC SS700).